We begin with the raw amino-acid sequence, 239 residues long: UPF0173 metal-dependent hydrolase DVU_3308 (239 aa).

The protein belongs to the UPF0173 family.

This Nitratidesulfovibrio vulgaris (strain ATCC 29579 / DSM 644 / CCUG 34227 / NCIMB 8303 / VKM B-1760 / Hildenborough) (Desulfovibrio vulgaris) protein is UPF0173 metal-dependent hydrolase DVU_3308.